Consider the following 152-residue polypeptide: UPF0266 membrane protein YobD (152 aa).

A run of 3 helical transmembrane segments spans residues Leu-6–Met-26, Ile-45–His-65, and Ala-67–Ile-87.

Belongs to the UPF0266 family.

It is found in the cell inner membrane. This is UPF0266 membrane protein YobD from Escherichia coli O45:K1 (strain S88 / ExPEC).